The following is a 531-amino-acid chain: SWI/SNF-related matrix-associated actin-dependent regulator of chromatin subfamily D member 2 (531 aa).

Asymmetric dimethylarginine occurs at positions 81 and 104. Serine 203 is subject to Phosphoserine. Residues 205–227 (SKAEGDTAGTTGTPGGTPAGDKV) are disordered. Position 217 is a phosphothreonine (threonine 217). A Glycyl lysine isopeptide (Lys-Gly) (interchain with G-Cter in SUMO2) cross-link involves residue lysine 226. The region spanning 306–383 (HQPPQYKLDP…PMKLAGLLQH (78 aa)) is the SWIB/MDM2 domain.

This sequence belongs to the SMARCD family. As to quaternary structure, component of the multiprotein chromatin-remodeling complexes SWI/SNF: SWI/SNF-A (BAF), SWI/SNF-B (PBAF) and related complexes. The canonical complex contains a catalytic subunit (either SMARCA4/BRG1/BAF190A or SMARCA2/BRM/BAF190B), and at least SMARCE1, ACTL6A/BAF53, SMARCC1/BAF155, SMARCC2/BAF170, and SMARCB1/SNF5/BAF47. Other subunits specific to each of the complexes may also be present permitting several possible combinations developmentally and tissue specific. Component of the BAF complex, which includes at least actin (ACTB), ARID1A/BAF250A, ARID1B/BAF250B, SMARCA2/BRM, SMARCA4/BRG1, ACTL6A/BAF53, ACTL6B/BAF53B, SMARCE1/BAF57, SMARCC1/BAF155, SMARCC2/BAF170, SMARCB1/SNF5/INI1, and one or more SMARCD1/BAF60A, SMARCD2/BAF60B, or SMARCD3/BAF60C. In muscle cells, the BAF complex also contains DPF3. Component of the SWI/SNF-B (PBAF) chromatin remodeling complex, at least composed of SMARCA4/BRG1, SMARCB1/BAF47/SNF5, ACTL6A/BAF53A or ACTL6B/BAF53B, SMARCE1/BAF57, SMARCD1/BAF60A, SMARCD2/BAF60B, perhaps SMARCD3/BAF60C, SMARCC1/BAF155, SMARCC2/BAF170, PBRM1/BAF180, ARID2/BAF200 and actin (ACTB). Interacts with UNKL. Interacts with CEBPE. Ubiquitinated through a signaling process involving RAC1 and the RING finger protein UNKL.

It is found in the nucleus. Its function is as follows. Involved in transcriptional activation and repression of select genes by chromatin remodeling (alteration of DNA-nucleosome topology). Component of SWI/SNF chromatin remodeling complexes that carry out key enzymatic activities, changing chromatin structure by altering DNA-histone contacts within a nucleosome in an ATP-dependent manner. Critical regulator of myeloid differentiation, controlling granulocytopoiesis and the expression of genes involved in neutrophil granule formation. In Bos taurus (Bovine), this protein is SWI/SNF-related matrix-associated actin-dependent regulator of chromatin subfamily D member 2 (SMARCD2).